The following is a 607-amino-acid chain: MTTPFDPSAFLSTCSGRPGVYRMFDSEARLLYVGKAKNLKNRLASYFRKSGLAPKTAALVARIAQVETTITANETEALLLEQTLIKEWRPPYNILLRDDKSYPYVFLSDGNFPRLSIHRGAKKQKGKYFGPYPSAGAIRESLSLLQKTFFVRQCEDSFYKNRTRPCLQYQIKRCKAPCVGLVDPAEYAEDVRHSVMFLEGRSNALTDELSGAMEQAASTLDFERAAELRDQISLLRRVQDQQSMEGGTGDVDVIAAFVNPGGACVHLISVRGGRVLGSKNFFPQTGIDEEVAEVMAAFLGQYYVSSPERDLPSELIVNVVHEDFPTLIEAIHELRGRELDISHRVRGTRARWQQLAVTNAEQALGARLANRQHVAARFDALAEVLNLDEPPQRLECYDISHSSGEATVASCVVFGPEGPIKSDYRRYNIEGVTAGDDYAAMHQALTRRFSKLKDGEGKLPDILLVDGGKGQLSMARDVLNELAVPDLILLGVAKGATRKAGFETLYLNDSAHEFTLKGDSPALHLIQQIRDEAHRFAITGHRARRGKTRRTSTLEGVAGVGPTRRRDLLKHFGGLQELSRASIDEIAKAPGISKKLAELIYANLHSE.

Residues 16–94 (GRPGVYRMFD…IKEWRPPYNI (79 aa)) enclose the GIY-YIG domain. One can recognise a UVR domain in the interval 203 to 238 (NALTDELSGAMEQAASTLDFERAAELRDQISLLRRV).

This sequence belongs to the UvrC family. As to quaternary structure, interacts with UvrB in an incision complex.

It is found in the cytoplasm. In terms of biological role, the UvrABC repair system catalyzes the recognition and processing of DNA lesions. UvrC both incises the 5' and 3' sides of the lesion. The N-terminal half is responsible for the 3' incision and the C-terminal half is responsible for the 5' incision. This chain is UvrABC system protein C, found in Pseudomonas fluorescens (strain SBW25).